The sequence spans 364 residues: Alanine racemase (364 aa).

K35 acts as the Proton acceptor; specific for D-alanine in catalysis. K35 carries the N6-(pyridoxal phosphate)lysine modification. R130 contacts substrate. Residue Y256 is the Proton acceptor; specific for L-alanine of the active site. Substrate is bound at residue M304.

Belongs to the alanine racemase family. Pyridoxal 5'-phosphate serves as cofactor.

It carries out the reaction L-alanine = D-alanine. It functions in the pathway amino-acid biosynthesis; D-alanine biosynthesis; D-alanine from L-alanine: step 1/1. Catalyzes the interconversion of L-alanine and D-alanine. May also act on other amino acids. The chain is Alanine racemase (alr) from Polaromonas sp. (strain JS666 / ATCC BAA-500).